A 423-amino-acid chain; its full sequence is Endochitinase 42 (423 aa).

A signal peptide spans 1-22 (MLSFLGKSVALLAALQATLSSP). The propeptide occupies 23–34 (KPGHRRASVEKR). The GH18 domain maps to 38–401 (YANSVYFTNW…GTSHRALGGL (364 aa)). Chitin is bound by residues 102 to 103 (GT) and 129 to 132 (GGWT). Residue Glu-171 is the Proton donor of the active site. Position 172 (Tyr-172) interacts with chitin. Asn-218 carries N-linked (GlcNAc...) asparagine glycosylation. Chitin-binding positions include 237 to 240 (MAYD) and Trp-378.

The protein belongs to the glycosyl hydrolase 18 family. Chitinase class V subfamily.

It localises to the secreted. It carries out the reaction Random endo-hydrolysis of N-acetyl-beta-D-glucosaminide (1-&gt;4)-beta-linkages in chitin and chitodextrins.. Its function is as follows. Secreted chitinase involved in the degradation of chitin, a component of the cell walls of fungi and exoskeletal elements of some animals (including worms and arthropods). Plays a morphogenetic role during apical growth, cell division and differentiation (cell wall morphogenesis). Also acts as an antifungal agent. Involved in the degradation and further assimilation of phytopathogenic fungi, namely mycoparasitism, the major mechanism accounting for the antagonistic activity against phytopathogenic fungi displayed by Trichoderma. This Trichoderma harzianum (Hypocrea lixii) protein is Endochitinase 42 (chit42).